The chain runs to 489 residues: Protein P7 (489 aa).

RNA-binding stretches follow at residues 129-251 (TSLI…GRML) and 321-351 (AGDYGNNVIIIENPPHSDVRGLGVKYSFQVN).

This sequence belongs to the phytoreovirus protein P7 family.

It is found in the virion. The protein resides in the host cytoplasm. Probable component of the transcriptional machinery present in the inner capsid. Displays dsRNA binding activity and may play an important role in the sorting of viral RNA and virion assembly. Together with the RNA-directed RNA polymerase P1 and capping enzyme P5, forms an transcriptional complex positioned near the channels situated at each of the five-fold vertices of the core. The chain is Protein P7 from Rice gall dwarf virus (RGDV).